A 227-amino-acid chain; its full sequence is (S)-2-haloacid dehalogenase (227 aa).

Asp-10 serves as the catalytic Nucleophile. An (S)-2-haloacid is bound by residues 11 to 12 (LY), Arg-41, and 118 to 119 (SN). Positions 175–180 (SSNAWD) are important for catalytic activity.

This sequence belongs to the HAD-like hydrolase superfamily. S-2-haloalkanoic acid dehalogenase family. As to quaternary structure, homotetramer.

It carries out the reaction an (S)-2-haloacid + H2O = a (2R)-2-hydroxycarboxylate + a halide anion + H(+). The catalysed reaction is (S)-2-chloropropanoate + H2O = (R)-lactate + chloride + H(+). Catalyzes the hydrolytic dehalogenation of small (S)-2-haloalkanoic acids to yield the corresponding (R)-2-hydroxyalkanoic acids. Acts on acids of short chain lengths, C(2) to C(4), with inversion of configuration at C-2. Active with 2-halogenated carboxylic acids and converts only the S-isomer (or L-isomer) of 2-chloropropionic acid with inversion of configuration to produce R-lactate (or D-isomer). The polypeptide is (S)-2-haloacid dehalogenase (Pseudomonas putida (Arthrobacter siderocapsulatus)).